The following is a 67-amino-acid chain: DNA-directed RNA polymerase subunit omega (67 aa).

The protein belongs to the RNA polymerase subunit omega family. As to quaternary structure, the RNAP catalytic core consists of 2 alpha, 1 beta, 1 beta' and 1 omega subunit. When a sigma factor is associated with the core the holoenzyme is formed, which can initiate transcription.

The enzyme catalyses RNA(n) + a ribonucleoside 5'-triphosphate = RNA(n+1) + diphosphate. Functionally, promotes RNA polymerase assembly. Latches the N- and C-terminal regions of the beta' subunit thereby facilitating its interaction with the beta and alpha subunits. This chain is DNA-directed RNA polymerase subunit omega, found in Burkholderia ambifaria (strain MC40-6).